A 639-amino-acid chain; its full sequence is Protein zwilch homolog (639 aa).

Over residues 76–95 (QKTSSLLNRRENKKTIKSEK) the composition is skewed to basic and acidic residues. The segment at 76 to 116 (QKTSSLLNRRENKKTIKSEKEDESMDMETAEGDKENTVSET) is disordered. Residues 96–105 (EDESMDMETA) are compositionally biased toward acidic residues.

The protein belongs to the ZWILCH family. As to quaternary structure, component of the RZZ complex composed of rod-1, czw-1 and zwl-1. Interacts with the spindly-like protein spdl-1. Interacts with NDC80 complex component ndc-80.

The protein resides in the cytoplasm. It localises to the cell cortex. It is found in the chromosome. Its subcellular location is the centromere. The protein localises to the kinetochore. The protein resides in the cytoskeleton. It localises to the spindle. Functionally, essential component of the mitotic checkpoint, which prevents cells from prematurely exiting mitosis. Required for chromosome segregation, the assembly of the dynein-dynactin and mdf-1-mdf-2 complexes onto kinetochores and spindle pole separation. Its function related to the spindle assembly machinery and kinetochore-microtubule attachments likely depends on its association in the mitotic RZZ complex. The RZZ complex recruits the spindly-like protein spdl-1 to kinetochores. To prevent irregular chromosome segregation, the complex also inhibits the attachment of the kinetochore-associated NDC80 complex to microtubules. The recruitment of spdl-1 to kinetochores relieves this inhibition. Required for embryonic development. This Caenorhabditis briggsae protein is Protein zwilch homolog (zwl-1).